A 686-amino-acid polypeptide reads, in one-letter code: Methionine--tRNA ligase (686 aa).

A 'HIGH' region motif is present at residues 22–32; sequence PYANGPIHLGH. Cysteine 153, cysteine 156, cysteine 166, and cysteine 169 together coordinate Zn(2+). The short motif at 337–341 is the 'KMSKS' region element; the sequence is KMSKS. Lysine 340 lines the ATP pocket. Residues 547 to 573 are disordered; the sequence is MLEDSKESTPAPAAAKPKKAATQKADA. The tRNA-binding domain occupies 584–686; that stretch reads DFLKVKLRVA…SGAEPGMEVR (103 aa).

Belongs to the class-I aminoacyl-tRNA synthetase family. MetG type 1 subfamily. As to quaternary structure, homodimer. Zn(2+) serves as cofactor.

Its subcellular location is the cytoplasm. It carries out the reaction tRNA(Met) + L-methionine + ATP = L-methionyl-tRNA(Met) + AMP + diphosphate. In terms of biological role, is required not only for elongation of protein synthesis but also for the initiation of all mRNA translation through initiator tRNA(fMet) aminoacylation. This is Methionine--tRNA ligase from Alcanivorax borkumensis (strain ATCC 700651 / DSM 11573 / NCIMB 13689 / SK2).